The chain runs to 55 residues: Large ribosomal subunit protein bL33 (55 aa).

Belongs to the bacterial ribosomal protein bL33 family.

The polypeptide is Large ribosomal subunit protein bL33 (Mesorhizobium japonicum (strain LMG 29417 / CECT 9101 / MAFF 303099) (Mesorhizobium loti (strain MAFF 303099))).